The following is a 4262-amino-acid chain: Polyketide synthase PksM (4262 aa).

The tract at residues 1–114 (MITEQLHISL…ADMHRKEQTA (114 aa)) is N-terminal hotdog fold 1. A PKS/mFAS DH 1 domain is found at 1–271 (MITEQLHISL…GKSVRNMSAF (271 aa)). Residue His18 is the Proton acceptor; for dehydratase activity 1 of the active site. Residues 129–271 (DRILNLDEIY…GKSVRNMSAF (143 aa)) are C-terminal hotdog fold 1. The active-site Proton donor; for dehydratase activity 1 is the Asp190. Residues 293–367 (PAFEMYLRQL…ELAAHLADHY (75 aa)) enclose the Carrier 1 domain. Ser327 carries the O-(pantetheine 4'-phosphoryl)serine modification. The region spanning 393–831 (GEDIAIIGMA…GSNAHLILEE (439 aa)) is the Ketosynthase family 3 (KS3) 1 domain. Active-site for beta-ketoacyl synthase 1 activity residues include Cys569, His704, and His744. Positions 1009 to 1135 (HPLVHRNTSD…GRAVISDEAE (127 aa)) are N-terminal hotdog fold 2. The region spanning 1009-1301 (HPLVHRNTSD…MRALDGEQHS (293 aa)) is the PKS/mFAS DH 2 domain. Residue His1038 is the Proton acceptor; for dehydratase activity 2 of the active site. The interval 1149-1301 (SLDTVTSEQC…MRALDGEQHS (153 aa)) is C-terminal hotdog fold 2. Residue Asp1211 is the Proton donor; for dehydratase activity 2 of the active site. In terms of domain architecture, Carrier 2 spans 2188–2261 (EKSTEYMKKL…ALVEHFIKTK (74 aa)). O-(pantetheine 4'-phosphoryl)serine is present on Ser2222. Positions 2275 to 2291 (VQQHTPAESRTQSSQKP) are enriched in polar residues. The segment at 2275-2313 (VQQHTPAESRTQSSQKPDQAAKRTRRFRKLGFSGEKETP) is disordered. The Ketosynthase family 3 (KS3) 2 domain maps to 2319–2734 (SRDVAVIGIS…GSNAHIILEE (416 aa)). Active-site for beta-ketoacyl synthase 2 activity residues include Cys2476, His2611, and His2651. Residues 2750-2826 (ALIVLSAKNM…DFIENKADSL (77 aa)) adopt a coiled-coil conformation. Positions 3409-3486 (SIEKRLEHDL…ELISFFLTDH (78 aa)) constitute a Carrier 3 domain. Residue Ser3446 is modified to O-(pantetheine 4'-phosphoryl)serine. Positions 3529-3944 (DEPIAIIGMS…GTNAHAVIEE (416 aa)) constitute a Ketosynthase family 3 (KS3) 3 domain. Residues Cys3690, His3825, and His3865 each act as for beta-ketoacyl synthase 3 activity in the active site. The stretch at 4004–4033 (KAMEARLAIVANNQEQLVRKLKEYVEAMKN) forms a coiled coil. One can recognise a Carrier 4 domain in the interval 4135 to 4212 (NGKTHIQKII…ALSDHLALKA (78 aa)). Ser4172 carries the post-translational modification O-(pantetheine 4'-phosphoryl)serine.

The cofactor is pantetheine 4'-phosphate.

The protein resides in the cytoplasm. The protein operates within antibiotic biosynthesis; bacillaene biosynthesis. Its function is as follows. Involved in some intermediate steps for the synthesis of the antibiotic polyketide bacillaene which is involved in secondary metabolism. This is Polyketide synthase PksM (pksM) from Bacillus subtilis (strain 168).